The following is a 356-amino-acid chain: MAGLKLQAVTKSWDGKTQVIKPLTLDVADGEFIVMVGPSGCGKSTLLRMVAGLERVTEGDIWINDQRVTEMEPKDRGIAMVFQNYALYPHMSVEENMAWGLKIRGMGKQQIAERVKEAARILELDGLLKRRPRELSGGQRQRVAMGRAIVRDPAVFLFDEPLSNLDAKLRVQMRLELQQLHRRLKTTSLYVTHDQVEAMTLAQRVMVMNGGVAEQIGTPVEVYEKPASLFVASFIGSPAMNLLTGRVNNEGTHFELDGGIELPLNGGYRQYAGRKMTLGIRPEHIALSSQAEGGVPMVMDTLEILGADNLAHGRWGEQKLVVRLAHQERPTAGSTLWLHLAENQLHLFDGETGQRV.

The region spanning Leu4–Ile235 is the ABC transporter domain. Gly37–Ser44 lines the ATP pocket.

This sequence belongs to the ABC transporter superfamily. sn-glycerol-3-phosphate importer (TC 3.A.1.1.3) family. In terms of assembly, the complex is composed of two ATP-binding proteins (UgpC), two transmembrane proteins (UgpA and UgpE) and a solute-binding protein (UgpB).

It is found in the cell inner membrane. The enzyme catalyses sn-glycerol 3-phosphate(out) + ATP + H2O = sn-glycerol 3-phosphate(in) + ADP + phosphate + H(+). It carries out the reaction glycerol 2-phosphate(out) + ATP + H2O = glycerol 2-phosphate(in) + ADP + phosphate + H(+). Its activity is regulated as follows. ATPase activity is stimulated when UgpB is bound to G3P. Transport is inhibited in vivo by increasing levels of internal phosphate. However, ATPase activity in proteoliposomes is neither inhibited by phosphate nor by the signal transducing protein PhoU or the phosphodiesterase UgpQ. Activated by gluconate and inhibited by fumarate. In terms of biological role, part of the ABC transporter complex UgpBAEC involved in sn-glycerol-3-phosphate (G3P) import. Responsible for energy coupling to the transport system. Can also transport glycerophosphoryl diesters, which are hydrolyzed to G3P and alcohol during transport. The G3P moiety can be detected in the cytoplasm whereas the corresponding alcohol is usually found in the culture medium. It was proposed by Yang et al that the complex could also transport glycerol-2-phosphate (G2P) in vivo, but it was shown later by Wuttge et al that UgpB does not bind G2P, questioning this transport activity. G2P might be converted in the periplasm to G3P before its transport. This Escherichia coli (strain K12) protein is sn-glycerol-3-phosphate import ATP-binding protein UgpC.